A 58-amino-acid polypeptide reads, in one-letter code: uncharacterized protein (58 aa).

Disordered regions lie at residues 1 to 20 and 38 to 58; these read MKKN…MNKK and IIET…KKQQ.

This is an uncharacterized protein from Bacillus subtilis (strain 168).